Reading from the N-terminus, the 239-residue chain is Fatty acid metabolism regulator protein (239 aa).

The HTH gntR-type domain occupies 6–74 (QSPAGFAEEY…HGKPTKINNF (69 aa)). The segment at residues 34–53 (ERELSELIGVTRTTLREVLQ) is a DNA-binding region (H-T-H motif).

In terms of assembly, homodimer.

It is found in the cytoplasm. Functionally, multifunctional regulator of fatty acid metabolism. This is Fatty acid metabolism regulator protein from Pectobacterium carotovorum subsp. carotovorum (strain PC1).